The primary structure comprises 368 residues: WD repeat-containing protein wdr-5.1 (368 aa).

The interval 1-64 (MDPAQNQPNT…APTTSQESTI (64 aa)) is disordered. Residues 16 to 42 (PAVEEAQGVNNSEAEAPAPAALSSVSP) are compositionally biased toward low complexity. 7 WD repeats span residues 77-116 (GHTKSISAVKFSPCGKFLGTSSADKTVKIWNMSDLSCERT), 119-158 (GHKLGVNDFAWSADSKSIVTASDDKTLKIYEVPTVKMAKT), 161-200 (GHTNYVFCCNFNPQSSLVVSGSFDESVRIWDVRTGMCVKT), 203-242 (AHSDPVSAVSFNRDGSLITSGSYDGLVRIWDTANGQCVKT), 246-285 (DENPPVAFVKFSPNGKYILSSNLDNTLKLWDFGKGKTLKQ), 288-330 (GHEN…VVQS), and 333-368 (GHTQAVIASDCHPMQNMIASGALEPDNTIRIWRSDS).

This Caenorhabditis briggsae protein is WD repeat-containing protein wdr-5.1.